The chain runs to 110 residues: UPF0060 membrane protein BTH_I2792 (110 aa).

A run of 4 helical transmembrane segments spans residues 9 to 29 (ALFVLTAVAEIVGCYLPWLVL), 34 to 54 (PVWLLAPAALSLALFAWLLTL), 64 to 84 (AAYGGVYIAVALAWLRIVDGV), and 86 to 106 (LSRWDAAGAALALAGMSVIAL).

It belongs to the UPF0060 family.

The protein resides in the cell inner membrane. This Burkholderia thailandensis (strain ATCC 700388 / DSM 13276 / CCUG 48851 / CIP 106301 / E264) protein is UPF0060 membrane protein BTH_I2792.